A 111-amino-acid polypeptide reads, in one-letter code: 2Fe-2S ferredoxin (111 aa).

The region spanning 2–104 (PKIVILPHQD…DLVVEIPRYT (103 aa)) is the 2Fe-2S ferredoxin-type domain. The [2Fe-2S] cluster site is built by Cys-42, Cys-48, Cys-51, and Cys-87.

This sequence belongs to the adrenodoxin/putidaredoxin family. [2Fe-2S] cluster serves as cofactor.

In terms of biological role, ferredoxin are iron-sulfur proteins that transfer electrons in a wide variety of metabolic reactions. Although the function of this ferredoxin is unknown it is probable that it has a role as a cellular electron transfer protein. Involved in the in vivo assembly of the Fe-S clusters in a wide variety of iron-sulfur proteins. This Escherichia coli O157:H7 protein is 2Fe-2S ferredoxin (fdx).